The chain runs to 313 residues: Tagatose-6-phosphate kinase (313 aa).

The protein belongs to the carbohydrate kinase PfkB family. LacC subfamily.

The catalysed reaction is D-tagatofuranose 6-phosphate + ATP = D-tagatofuranose 1,6-bisphosphate + ADP + H(+). It participates in carbohydrate metabolism; D-tagatose 6-phosphate degradation; D-glyceraldehyde 3-phosphate and glycerone phosphate from D-tagatose 6-phosphate: step 1/2. The polypeptide is Tagatose-6-phosphate kinase (Enterococcus faecalis (strain ATCC 700802 / V583)).